Here is a 389-residue protein sequence, read N- to C-terminus: 2-aminoethylphosphonate--pyruvate transaminase 1 (389 aa).

Residue lysine 196 is modified to N6-(pyridoxal phosphate)lysine.

Belongs to the class-V pyridoxal-phosphate-dependent aminotransferase family. PhnW subfamily. In terms of assembly, homodimer. Pyridoxal 5'-phosphate serves as cofactor.

The catalysed reaction is (2-aminoethyl)phosphonate + pyruvate = phosphonoacetaldehyde + L-alanine. Involved in phosphonate degradation. The protein is 2-aminoethylphosphonate--pyruvate transaminase 1 of Paraburkholderia xenovorans (strain LB400).